Here is a 196-residue protein sequence, read N- to C-terminus: MSIEVFNESGYDGVNEEMLIDVLSFALGEMDIHPDAEASIHIVDLDTIADLHVKWLDLEGPTDVMSFPMDELTPGYSRPDGATPGPAMLGDIVLCPEFAAKQATKAGHDLAHELALLTVHGSLHLLGYDHVDPAEEREMFALQNELLADWYDNVEARGVTYQPKPSGAGAFPTAADRLELDEKMEADDSGFGGVES.

Zn(2+) is bound by residues His-120, His-124, and His-130.

This sequence belongs to the endoribonuclease YbeY family. Zn(2+) is required as a cofactor.

It is found in the cytoplasm. In terms of biological role, single strand-specific metallo-endoribonuclease involved in late-stage 70S ribosome quality control and in maturation of the 3' terminus of the 16S rRNA. In Corynebacterium glutamicum (strain R), this protein is Endoribonuclease YbeY.